Consider the following 154-residue polypeptide: UPF0178 protein GDI0551/Gdia_1457 (154 aa).

This sequence belongs to the UPF0178 family.

This Gluconacetobacter diazotrophicus (strain ATCC 49037 / DSM 5601 / CCUG 37298 / CIP 103539 / LMG 7603 / PAl5) protein is UPF0178 protein GDI0551/Gdia_1457.